Here is a 141-residue protein sequence, read N- to C-terminus: Lutropin subunit beta (141 aa).

The signal sequence occupies residues 1–20 (MERLQGLLLWLLLSPSVVWA). Cystine bridges form between Cys-29–Cys-77, Cys-43–Cys-92, Cys-54–Cys-108, Cys-58–Cys-110, and Cys-113–Cys-120. N-linked (GlcNAc...) asparagine glycosylation is present at Asn-33.

Belongs to the glycoprotein hormones subunit beta family. Heterodimer of a common alpha chain and a unique beta chain which confers biological specificity to thyrotropin, lutropin, follitropin and gonadotropin.

It is found in the secreted. Functionally, promotes spermatogenesis and ovulation by stimulating the testes and ovaries to synthesize steroids. This is Lutropin subunit beta (Lhb) from Mus musculus (Mouse).